Reading from the N-terminus, the 282-residue chain is ATP synthase gamma chain (282 aa).

The protein belongs to the ATPase gamma chain family. As to quaternary structure, F-type ATPases have 2 components, CF(1) - the catalytic core - and CF(0) - the membrane proton channel. CF(1) has five subunits: alpha(3), beta(3), gamma(1), delta(1), epsilon(1). CF(0) has three main subunits: a, b and c.

The protein localises to the cell membrane. Produces ATP from ADP in the presence of a proton gradient across the membrane. The gamma chain is believed to be important in regulating ATPase activity and the flow of protons through the CF(0) complex. This chain is ATP synthase gamma chain, found in Clostridium botulinum (strain Kyoto / Type A2).